A 309-amino-acid chain; its full sequence is Ribonuclease Z (309 aa).

Zn(2+) is bound by residues histidine 63, histidine 65, aspartate 67, histidine 68, histidine 145, aspartate 216, and histidine 274. Residue aspartate 67 is the Proton acceptor of the active site.

The protein belongs to the RNase Z family. Homodimer. It depends on Zn(2+) as a cofactor.

The enzyme catalyses Endonucleolytic cleavage of RNA, removing extra 3' nucleotides from tRNA precursor, generating 3' termini of tRNAs. A 3'-hydroxy group is left at the tRNA terminus and a 5'-phosphoryl group is left at the trailer molecule.. Functionally, zinc phosphodiesterase, which displays some tRNA 3'-processing endonuclease activity. Probably involved in tRNA maturation, by removing a 3'-trailer from precursor tRNA. The chain is Ribonuclease Z from Streptococcus pneumoniae serotype 19F (strain G54).